The primary structure comprises 300 residues: Glutamyl-Q tRNA(Asp) synthetase (300 aa).

L-glutamate is bound by residues 8–12 (RFAPS) and Glu-44. A 'HIGH' region motif is present at residues 11–21 (PSPTGALHAGS). Residues Cys-100, Cys-102, Tyr-126, and Cys-130 each coordinate Zn(2+). Residues Tyr-190 and Arg-208 each contribute to the L-glutamate site. The 'KMSKS' region signature appears at 246 to 250 (KLSKQ). Lys-249 contacts ATP.

The protein belongs to the class-I aminoacyl-tRNA synthetase family. GluQ subfamily. It depends on Zn(2+) as a cofactor.

Catalyzes the tRNA-independent activation of glutamate in presence of ATP and the subsequent transfer of glutamate onto a tRNA(Asp). Glutamate is transferred on the 2-amino-5-(4,5-dihydroxy-2-cyclopenten-1-yl) moiety of the queuosine in the wobble position of the QUC anticodon. In Leptothrix cholodnii (strain ATCC 51168 / LMG 8142 / SP-6) (Leptothrix discophora (strain SP-6)), this protein is Glutamyl-Q tRNA(Asp) synthetase.